Reading from the N-terminus, the 406-residue chain is Cysteine desulfurase (406 aa).

N6-(pyridoxal phosphate)lysine is present on lysine 226. Cysteine 364 acts as the Cysteine persulfide intermediate in catalysis.

Belongs to the class-V pyridoxal-phosphate-dependent aminotransferase family. Csd subfamily. As to quaternary structure, homodimer. Interacts with SufE and the SufBCD complex composed of SufB, SufC and SufD. The interaction with SufE is required to mediate the direct transfer of the sulfur atom from the S-sulfanylcysteine. Requires pyridoxal 5'-phosphate as cofactor.

The protein resides in the cytoplasm. It carries out the reaction (sulfur carrier)-H + L-cysteine = (sulfur carrier)-SH + L-alanine. The catalysed reaction is L-selenocysteine + AH2 = hydrogenselenide + L-alanine + A + H(+). It functions in the pathway cofactor biosynthesis; iron-sulfur cluster biosynthesis. Its function is as follows. Cysteine desulfurases mobilize the sulfur from L-cysteine to yield L-alanine, an essential step in sulfur metabolism for biosynthesis of a variety of sulfur-containing biomolecules. Component of the suf operon, which is activated and required under specific conditions such as oxidative stress and iron limitation. Acts as a potent selenocysteine lyase in vitro, that mobilizes selenium from L-selenocysteine. Selenocysteine lyase activity is however unsure in vivo. In Escherichia coli O157:H7 (strain EC4115 / EHEC), this protein is Cysteine desulfurase.